The sequence spans 392 residues: V-type proton ATPase subunit C (392 aa).

Ala-2 bears the N-acetylalanine mark.

The protein belongs to the V-ATPase C subunit family. In terms of assembly, V-ATPase is a heteromultimeric enzyme composed of a peripheral catalytic V1 complex (components A to H) attached to an integral membrane V0 proton pore complex (components: a, c, c', c'', d, e, f and VOA1). Interacts directly with VMA4.

The protein localises to the vacuole membrane. Subunit of the V1 complex of vacuolar(H+)-ATPase (V-ATPase), a multisubunit enzyme composed of a peripheral complex (V1) that hydrolyzes ATP and a membrane integral complex (V0) that translocates protons. V-ATPase is responsible for acidifying and maintaining the pH of intracellular compartments. Subunit C is necessary for the assembly of the catalytic sector of the enzyme and is likely to have a specific function in its catalytic activity. Reversibly leaves the enzyme after glucose depletion, causing the catalytic subcomplex V1 to detach from the V0 section. This Saccharomyces cerevisiae (strain ATCC 204508 / S288c) (Baker's yeast) protein is V-type proton ATPase subunit C.